We begin with the raw amino-acid sequence, 299 residues long: Bifunctional protein FolD (299 aa).

NADP(+) contacts are provided by residues 166 to 168 (GRS), Ser-191, and Ile-232.

The protein belongs to the tetrahydrofolate dehydrogenase/cyclohydrolase family. As to quaternary structure, homodimer.

The catalysed reaction is (6R)-5,10-methylene-5,6,7,8-tetrahydrofolate + NADP(+) = (6R)-5,10-methenyltetrahydrofolate + NADPH. It carries out the reaction (6R)-5,10-methenyltetrahydrofolate + H2O = (6R)-10-formyltetrahydrofolate + H(+). It functions in the pathway one-carbon metabolism; tetrahydrofolate interconversion. In terms of biological role, catalyzes the oxidation of 5,10-methylenetetrahydrofolate to 5,10-methenyltetrahydrofolate and then the hydrolysis of 5,10-methenyltetrahydrofolate to 10-formyltetrahydrofolate. The chain is Bifunctional protein FolD from Anaplasma marginale (strain St. Maries).